The sequence spans 636 residues: MPALTYLLLAAIGASTVHSLPSQQSCNAPVTPSSFSSTSLDVVIVGGGTAGLVLASRLSESKKLQVGVIEGGYDRTNDPLIDVPNAANALGYQGAVFGNSTYDWEYTSVPQRGLGGRVLSYPSGKVLGGSSAINGLTIQRGSREDYDAWGNAFGNGPEWTFDALLPYFKRYERWHAPTLSATGDLNSDGLSAVHGTDGRISISYNNFFTGVDIPLTQAGIALGLGPTQNPDGGDDSLFPNFGASHSLDPATGNRSYAANGYYGQTERCRSNLHLLTGAVVTRIIWDKKKATKAVGVEYAVGNDKFTVKASKEVVLSAGSLRSPQILELSGVGNKTLLESLNIPVVVDIPQLGENLQEQFIAGTDFLVRDGVVTLDALGNNATFLAEQQNLYRTNKTGAFTYLSNVNAPTPIRSLVTEDQYKTMRAALDTYLASQTLTPLQIVQYNLVKQFLDGGKVATSSLLVVASGGLVSTPAAGQGYISVVSSPAHPLSRGNVHINTTDPLAYPLIDSAFLTNPWDAQATINVMKFVRRWVAKSDIIESPGTPPQAADEWSDDQWIAYLQSVLGTAHHPVGTAAMASQKLGGVVDPRFKVYGLKNVRIVDASVFPMHIGVAPSSTTYMLAEKAADAIKKDLNAY.

The N-terminal stretch at 1–19 (MPALTYLLLAAIGASTVHS) is a signal peptide. FAD-binding positions include 49-50 (TA) and 70-71 (EG). Asn-99 carries N-linked (GlcNAc...) asparagine glycosylation. FAD contacts are provided by residues Trp-104 and 134 to 137 (NGLT). A glycan (N-linked (GlcNAc...) asparagine) is linked at Asn-253. Val-280 contributes to the FAD binding site. N-linked (GlcNAc...) asparagine glycans are attached at residues Asn-333, Asn-380, Asn-394, and Asn-498. The Proton acceptor role is filled by His-570. Residues Ala-603 and 614–615 (PS) each bind FAD.

This sequence belongs to the GMC oxidoreductase family. It depends on FAD as a cofactor.

The protein operates within secondary metabolite biosynthesis. Its function is as follows. Dehydrogenase, part of the gene cluster that mediates the biosynthesis of melleolides, a range of antifungal and phytotoxic polyketide derivatives composed of an orsellinic acid (OA) moiety esterified to various sesquiterpene alcohols. The first step in melleolides biosynthesis is performed by the delta(6)-protoilludene synthase PRO1 which catalyzes the cyclization of farnesyl diphosphate to protoilludene. The orsellinic acid synthase armB produces OA by condensing acetyl-CoA with 3 malonyl-CoA units in a three-round chain elongation reaction folowed by a C2-C7 ring closure. ArmB further catalyzes the trans-esterification of OA to the various sesquiterpene alcohols resulting from the hydroxylation of protoilludene. The melleolides cluster also includes 5 cytochrome P450 monooxygenases, 4 NAD(+)-dependent oxidoreductases, one flavin-dependent oxidoreductase, and one O-methyltransferase. The cytochrome P450 monooxygenases may be involved in protoilludene hydroxylation to elaborate melleolides with multiple alcohol groups, such as melleolide D, which carries alcohol functionalities at C-4, C-5, C-10, and C-13. The role of the NAD(+)-dependent enzymes remains unknown. Numerous melleolides, including arnamial, show 5'-O-methylation of the aromatic moiety which may be catalyzed by the methyltransferase encoded in the cluster. The flavin-dependent oxidoreductase might represent the dehydrogenase yielding the aldehyde in position 1 of arnamial and other melleolides. Finally, several halogenase localized outside of the cluster, are able to catalyze the transfer of a single chlorine atom to the melleolide backbone, resulting in a 6'-chloromelleolide product. The chain is Dehydrogenase ARMGADRAFT_1018426 from Armillaria gallica (Bulbous honey fungus).